The chain runs to 578 residues: Nuclear receptor subfamily 1 group D member 2 (578 aa).

The segment at 1–60 is required for phosphorylation by CSNK1E and cytoplasmic localization; it reads MELNAGGVIAYISSSSSASSPASCHSEGSENSFQSSSSSVPSSPNSSNCDANGNPKNTDV. A modulating region spans residues 1–99; that stretch reads MELNAGGVIA…HSGMTKFSGM (99 aa). Over residues 13–47 the composition is skewed to low complexity; that stretch reads SSSSSASSPASCHSEGSENSFQSSSSSVPSSPNSS. The tract at residues 13–89 is disordered; sequence SSSSSASSPA…KPGAPGMTKS (77 aa). Position 46 is a phosphoserine; by GSK3-beta (S46). Residues 48–61 are compositionally biased toward polar residues; the sequence is NCDANGNPKNTDVS. The nuclear receptor DNA-binding region spans 100–176; that stretch reads VLLCKVCGDV…VGMSRDAVRF (77 aa). NR C4-type zinc fingers lie at residues 103 to 123 and 140 to 164; these read CKVCGDVASGFHYGVHACEGC and CLKNENCSIMRMNRNRCQQCRFKKC. 2 positions are modified to N6-acetyllysine; by KAT5: K162 and K163. A disordered region spans residues 214–247; it reads EPHEQSVPPAQEQLRPKPQLEQENIKSTPPPSDF. A compositionally biased stretch (basic and acidic residues) spans 227-237; it reads LRPKPQLEQEN. 2 cysteine pairs are disulfide-bonded: C336–C342 and C373–C383. The NR LBD domain maps to 368–578; that stretch reads RNSYLCSTGG…EELLAFKVHP (211 aa). Positions 383 and 567 each coordinate heme. The tract at residues 396–578 is interaction with ZNHIT1; the sequence is SGHEIWEEFS…EELLAFKVHP (183 aa).

Belongs to the nuclear hormone receptor family. NR1 subfamily. As to quaternary structure, binds DNA as a monomer or a homodimer. Interacts with NCOA5 coactivator, leading to a strong increase of transcription of target genes. Interacts (via N-terminus) with KAT5. Interacts (via C-terminus) with HDAC1. Interacts with ZNHIT1. Interacts with SIAH2. Post-translationally, deacetylated by HDAC1. Acetylation and deacetylation regulate its transcriptional regulatory activity. Under more reducing intracellular redox conditions, Cys-383 is in its heme-bound state, which is optimal for recruitment of the NCOR1/HDAC3 corepressor complex and repression of target genes. When subjected to oxidative stress conditions, Cys-383 undergoes oxidation to form a disulfide bridge with Cys-373, also triggering a ligand switch that results in release of bound heme and derepression of target genes. In terms of processing, ubiquitinated by SIAH2; leading to its proteasomal degradation. Post-translationally, phosphorylated by CSNK1E; phosphorylation enhances its cytoplasmic localization.

The protein localises to the nucleus. The protein resides in the cytoplasm. With respect to regulation, the heme-bound form can bind gaseous signaling molecules such as CO and nitric oxide (NO) and NO can reverse its transcriptional repressor activity. Functionally, transcriptional repressor which coordinates circadian rhythm and metabolic pathways in a heme-dependent manner. Integral component of the complex transcription machinery that governs circadian rhythmicity and forms a critical negative limb of the circadian clock by directly repressing the expression of core clock components BMAL1 and CLOCK. Also regulates genes involved in metabolic functions, including lipid metabolism and the inflammatory response. Acts as a receptor for heme which stimulates its interaction with the NCOR1/HDAC3 corepressor complex, enhancing transcriptional repression. Recognizes two classes of DNA response elements within the promoter of its target genes and can bind to DNA as either monomers or homodimers, depending on the nature of the response element. Binds as a monomer to a response element composed of the consensus half-site motif 5'-[A/G]GGTCA-3' preceded by an A/T-rich 5' sequence (RevRE), or as a homodimer to a direct repeat of the core motif spaced by two nuclegotides (RevDR-2). Acts as a potent competitive repressor of ROR alpha (RORA) function and also negatively regulates the expression of NR1D1. Regulates lipid and energy homeostasis in the skeletal muscle via repression of genes involved in lipid metabolism and myogenesis including: CD36, FABP3, FABP4, UCP3, SCD1 and MSTN. Regulates hepatic lipid metabolism via the repression of APOC3. Represses gene expression at a distance in macrophages by inhibiting the transcription of enhancer-derived RNAs (eRNAs). In addition to its activity as a repressor, can also act as a transcriptional activator. Acts as a transcriptional activator of the sterol regulatory element-binding protein 1 (SREBF1) and the inflammatory mediator interleukin-6 (IL6) in the skeletal muscle. Plays a role in the regulation of circadian sleep/wake cycle; essential for maintaining wakefulness during the dark phase or active period. Key regulator of skeletal muscle mitochondrial function; negatively regulates the skeletal muscle expression of core clock genes and genes involved in mitochondrial biogenesis, fatty acid beta-oxidation and lipid metabolism. May play a role in the circadian control of neutrophilic inflammation in the lung. The polypeptide is Nuclear receptor subfamily 1 group D member 2 (Rattus norvegicus (Rat)).